Here is a 369-residue protein sequence, read N- to C-terminus: Pyrimidine monooxygenase RutA (369 aa).

FMN is bound by residues 49 to 50, Asn-115, Glu-124, 140 to 141, and Ser-190; these read IK and RY.

The protein belongs to the NtaA/SnaA/DszA monooxygenase family. RutA subfamily.

The enzyme catalyses uracil + FMNH2 + NADH + O2 = (Z)-3-ureidoacrylate + FMN + NAD(+) + H2O + H(+). The catalysed reaction is thymine + FMNH2 + NADH + O2 = (Z)-2-methylureidoacrylate + FMN + NAD(+) + H2O + H(+). Functionally, catalyzes the pyrimidine ring opening between N-3 and C-4 by an unusual flavin hydroperoxide-catalyzed mechanism, adding oxygen atoms in the process to yield ureidoacrylate peracid, that immediately reacts with FMN forming ureidoacrylate and FMN-N(5)-oxide. The FMN-N(5)-oxide reacts spontaneously with NADH to produce FMN. Requires the flavin reductase RutF to regenerate FMN in vivo. The protein is Pyrimidine monooxygenase RutA of Acinetobacter baylyi (strain ATCC 33305 / BD413 / ADP1).